A 333-amino-acid polypeptide reads, in one-letter code: Uroporphyrinogen decarboxylase (333 aa).

Residues Arg-21–Arg-25, Asp-70, Tyr-139, Ser-194, and His-309 each bind substrate.

This sequence belongs to the uroporphyrinogen decarboxylase family. As to quaternary structure, homodimer.

It is found in the cytoplasm. The catalysed reaction is uroporphyrinogen III + 4 H(+) = coproporphyrinogen III + 4 CO2. The protein operates within porphyrin-containing compound metabolism; protoporphyrin-IX biosynthesis; coproporphyrinogen-III from 5-aminolevulinate: step 4/4. Its function is as follows. Catalyzes the decarboxylation of four acetate groups of uroporphyrinogen-III to yield coproporphyrinogen-III. This Chlamydia abortus (strain DSM 27085 / S26/3) (Chlamydophila abortus) protein is Uroporphyrinogen decarboxylase.